The chain runs to 247 residues: MILWSPSTCSFFWHWCLIAVSVLSSRSKESLRLSWSSDESSASSSSRICPLSNSKSVRLPQYPRGFGDVSGYRVSSSVSECYVQHGVLVAAWLVRGNFSDTAPRAYGTWGNERSATHFKVGAPQLENDGALRYETELPQVDARLSYVMLTVYPCSACNRSVLHCRPASRLPWLPLRVTPSDLERLFAERRYLTFLYVVLVQFVKHVALFSFGVQVACCVYLRWIRPWVRGRHRATGRTSREEEAKDD.

The N-terminal stretch at 1 to 27 (MILWSPSTCSFFWHWCLIAVSVLSSRS) is a signal peptide. Topologically, residues 28 to 192 (KESLRLSWSS…ERLFAERRYL (165 aa)) are lumenal. The region spanning 72-168 (YRVSSSVSEC…RSVLHCRPAS (97 aa)) is the Ig-like H-type domain. Residues cysteine 81 and cysteine 164 are joined by a disulfide bond. 2 N-linked (GlcNAc...) asparagine; by host glycosylation sites follow: asparagine 97 and asparagine 158. Residues 193-213 (TFLYVVLVQFVKHVALFSFGV) traverse the membrane as a helical segment. At 214–247 (QVACCVYLRWIRPWVRGRHRATGRTSREEEAKDD) the chain is on the cytoplasmic side.

It belongs to the cytomegalovirus US6 family.

It localises to the host endoplasmic reticulum membrane. The protein resides in the host cytoplasm. The protein localises to the host cytoskeleton. It is found in the host Golgi apparatus membrane. Influences cell-to-cell spread of virus in polarized cells. Promotes dissemination of virus across cell-cell junctions of polarized epithelial cells, maybe through the association with the cytoskeletal matrix. The chain is Unique short US9 glycoprotein (US9) from Homo sapiens (Human).